The following is a 226-amino-acid chain: 2-C-methyl-D-erythritol 4-phosphate cytidylyltransferase (226 aa).

The protein belongs to the IspD/TarI cytidylyltransferase family. IspD subfamily.

It carries out the reaction 2-C-methyl-D-erythritol 4-phosphate + CTP + H(+) = 4-CDP-2-C-methyl-D-erythritol + diphosphate. Its pathway is isoprenoid biosynthesis; isopentenyl diphosphate biosynthesis via DXP pathway; isopentenyl diphosphate from 1-deoxy-D-xylulose 5-phosphate: step 2/6. Its function is as follows. Catalyzes the formation of 4-diphosphocytidyl-2-C-methyl-D-erythritol from CTP and 2-C-methyl-D-erythritol 4-phosphate (MEP). The sequence is that of 2-C-methyl-D-erythritol 4-phosphate cytidylyltransferase from Prochlorococcus marinus (strain SARG / CCMP1375 / SS120).